The primary structure comprises 121 residues: MNLIQQLEQEEIARLNKEIPEFAPGDTVVVSVRVVEGTRSRLQAYEGVVIARRNRGLNSNFIVRKISSGEGVERTFQLYSPTVEKIEVKRRGDVRRAKLYYLRGLTGKAARIKEKLPARKG.

This sequence belongs to the bacterial ribosomal protein bL19 family.

Its function is as follows. This protein is located at the 30S-50S ribosomal subunit interface and may play a role in the structure and function of the aminoacyl-tRNA binding site. In Neisseria gonorrhoeae (strain ATCC 700825 / FA 1090), this protein is Large ribosomal subunit protein bL19.